Here is a 298-residue protein sequence, read N- to C-terminus: 1,2-dihydroxynaphthalene dioxygenase (298 aa).

2 VOC domains span residues 6–121 (ELGY…IFYG) and 146–267 (GIGH…FGWG). Fe cation is bound at residue His-149. Substrate-binding positions include His-149, 196–197 (QH), His-212, and Tyr-253. Fe cation is bound at residue His-212. Residue Glu-263 coordinates Fe cation.

It belongs to the extradiol ring-cleavage dioxygenase family. Homooctamer. Fe(2+) serves as cofactor.

The enzyme catalyses naphthalene-1,2-diol + O2 = 2-hydroxychromene-2-carboxylate + H(+). It functions in the pathway aromatic compound metabolism; naphthalene degradation. Involved in the naphthalene and naphthalenesulfonate catabolic pathway. Catalyzes the meta-cleavage of 1,2-dihydroxynaphthalene (1,2-DHN) to yield 2-hydroxychromene-2-carboxylic acid. Can also cleave 1,2,5-trihydroxynaphthalene (1,2,5-THN), 1,2,6-trihydroxynaphthalene (1,2,6-THN), 1,2,7-trihydroxynaphthalene (1,2,7-THN), 2,3-dihydroxybiphenyl, 3,4-dihydroxybiphenyl, catechol, 3-methylcatechol and 4-methylcatechol. The chain is 1,2-dihydroxynaphthalene dioxygenase (nsaC) from Sphingobium xenophagum.